The chain runs to 375 residues: Histidine biosynthesis bifunctional protein HisB (375 aa).

The histidinol-phosphatase stretch occupies residues 1 to 168 (MTPILFVDRD…GIAHELADAP (168 aa)). D8 functions as the Nucleophile in the catalytic mechanism. Mg(2+) contacts are provided by D8, D10, and D128. D10 functions as the Proton donor in the catalytic mechanism. The segment at 169–375 (RRAVVQRNTK…TALPSTKGAL (207 aa)) is imidazoleglycerol-phosphate dehydratase.

This sequence in the N-terminal section; belongs to the histidinol-phosphatase family. In the C-terminal section; belongs to the imidazoleglycerol-phosphate dehydratase family. The cofactor is Mg(2+).

It localises to the cytoplasm. The enzyme catalyses D-erythro-1-(imidazol-4-yl)glycerol 3-phosphate = 3-(imidazol-4-yl)-2-oxopropyl phosphate + H2O. It carries out the reaction L-histidinol phosphate + H2O = L-histidinol + phosphate. It functions in the pathway amino-acid biosynthesis; L-histidine biosynthesis; L-histidine from 5-phospho-alpha-D-ribose 1-diphosphate: step 6/9. The protein operates within amino-acid biosynthesis; L-histidine biosynthesis; L-histidine from 5-phospho-alpha-D-ribose 1-diphosphate: step 8/9. This chain is Histidine biosynthesis bifunctional protein HisB, found in Xanthomonas campestris pv. campestris (strain B100).